The sequence spans 521 residues: 3,4-dihydroxyphenylacetaldehyde synthase (521 aa).

An N6-(pyridoxal phosphate)lysine modification is found at K306.

This sequence belongs to the group II decarboxylase family. Pyridoxal 5'-phosphate serves as cofactor. Highly expressed in the cuticle and midgut. Low expression in the head and thorax.

It catalyses the reaction L-dopa + O2 + H2O + H(+) = 3,4-dihydroxyphenylacetaldehyde + H2O2 + NH4(+) + CO2. Its function is as follows. Catalyzes the decarboxylation-oxidative deamination of L-3,4-dihydroxyphenylalanine (L-DOPA) to 3,4-dihydroxylphenylacetaldehyde (DHPAA). Involved in cuticle development. Probably responsible for the protein cross-linking during the development of flexible cuticles. In Aedes aegypti (Yellowfever mosquito), this protein is 3,4-dihydroxyphenylacetaldehyde synthase.